The sequence spans 534 residues: Peptide chain release factor 3 (534 aa).

Residues 9–278 (ARRRTFAIIS…FFVEHAPPPQ (270 aa)) form the tr-type G domain. GTP contacts are provided by residues 18–25 (SHPDAGKT), 86–90 (DTPGH), and 140–143 (NKLD).

This sequence belongs to the TRAFAC class translation factor GTPase superfamily. Classic translation factor GTPase family. PrfC subfamily.

The protein resides in the cytoplasm. Its function is as follows. Increases the formation of ribosomal termination complexes and stimulates activities of RF-1 and RF-2. It binds guanine nucleotides and has strong preference for UGA stop codons. It may interact directly with the ribosome. The stimulation of RF-1 and RF-2 is significantly reduced by GTP and GDP, but not by GMP. This chain is Peptide chain release factor 3, found in Xanthomonas campestris pv. campestris (strain 8004).